Consider the following 97-residue polypeptide: Putative pterin-4-alpha-carbinolamine dehydratase (97 aa).

Belongs to the pterin-4-alpha-carbinolamine dehydratase family.

It carries out the reaction (4aS,6R)-4a-hydroxy-L-erythro-5,6,7,8-tetrahydrobiopterin = (6R)-L-erythro-6,7-dihydrobiopterin + H2O. The sequence is that of Putative pterin-4-alpha-carbinolamine dehydratase from Christiangramia forsetii (strain DSM 17595 / CGMCC 1.15422 / KT0803) (Gramella forsetii).